The following is a 188-amino-acid chain: Mediator of RNA polymerase II transcription subunit 29 (188 aa).

A compositionally biased stretch (polar residues) spans Met-1–Pro-11. Residues Met-1–Gly-27 are disordered.

The protein belongs to the Mediator complex subunit 29 family. In terms of assembly, component of the Mediator complex.

The protein resides in the nucleus. Component of the Mediator complex, a coactivator involved in the regulated transcription of nearly all RNA polymerase II-dependent genes. Mediator functions as a bridge to convey information from gene-specific regulatory proteins to the basal RNA polymerase II transcription machinery. Mediator is recruited to promoters by direct interactions with regulatory proteins and serves as a scaffold for the assembly of a functional preinitiation complex with RNA polymerase II and the general transcription factors. This is Mediator of RNA polymerase II transcription subunit 29 (med29) from Xenopus tropicalis (Western clawed frog).